The chain runs to 113 residues: Teretoxin Tan14.1 (113 aa).

The N-terminal stretch at 1–21 (MALEAQMTLRMFVLVAMASTV) is a signal peptide. Residues 22-86 (HVLSSSFSED…DETSSRTGKR (65 aa)) constitute a propeptide that is removed on maturation.

Belongs to the teretoxin N (TN) superfamily. In terms of processing, contains 2 disulfide bonds. In terms of tissue distribution, expressed by the venom duct.

It is found in the secreted. This is Teretoxin Tan14.1 from Terebra anilis (Auger snail).